We begin with the raw amino-acid sequence, 273 residues long: MKKIFSLALISLFAVILLAACGSKGSNGEASKESKKDTLAAIKDNDKIVFGVKTDTRLFGLKNPSSGEIEGFDIDIAKQIAKDILGDEKKAQFKEVTSKTRIPMLQNGDIDAIVATMTITEERKKEVDFSDVYFEAGQSLLVKKGSKIKSVENLGKGSKVLAVKGSTSSQNIREKAPEASVLEFENYAEAFTALKSGQGDALTTDNAILYGMADENKNYQLTGKPFTDEPYGIAVKKGQSALAKEINASLKKMKSDGRYDEIYKKWIKEDPAE.

The first 20 residues, 1–20, serve as a signal peptide directing secretion; the sequence is MKKIFSLALISLFAVILLAA. A lipid anchor (N-palmitoyl cysteine) is attached at C21. C21 carries S-diacylglycerol cysteine lipidation.

Belongs to the bacterial solute-binding protein 3 family. As to quaternary structure, the complex is composed of two ATP-binding proteins (GlnQ), two transmembrane proteins (GlnM and GlnP) and a solute-binding protein (GlnH).

Its subcellular location is the cell membrane. Part of the ABC transporter complex GlnHMPQ involved in glutamine transport. The protein is ABC transporter glutamine-binding protein GlnH (glnH) of Bacillus subtilis (strain 168).